A 432-amino-acid polypeptide reads, in one-letter code: Adenylosuccinate synthetase (432 aa).

GTP-binding positions include 12–18 (GDEGKGK) and 40–42 (GHT). The active-site Proton acceptor is D13. Mg(2+) is bound by residues D13 and G40. Residues 13 to 16 (DEGK), 38 to 41 (NAGH), T132, R146, Q226, T241, and R305 each bind IMP. Catalysis depends on H41, which acts as the Proton donor. 301–307 (TVTGRKR) provides a ligand contact to substrate. GTP-binding positions include R307, 333 to 335 (KLD), and 415 to 417 (STS).

The protein belongs to the adenylosuccinate synthetase family. Homodimer. It depends on Mg(2+) as a cofactor.

It localises to the cytoplasm. It carries out the reaction IMP + L-aspartate + GTP = N(6)-(1,2-dicarboxyethyl)-AMP + GDP + phosphate + 2 H(+). It functions in the pathway purine metabolism; AMP biosynthesis via de novo pathway; AMP from IMP: step 1/2. In terms of biological role, plays an important role in the de novo pathway of purine nucleotide biosynthesis. Catalyzes the first committed step in the biosynthesis of AMP from IMP. The sequence is that of Adenylosuccinate synthetase from Rhizobium etli (strain ATCC 51251 / DSM 11541 / JCM 21823 / NBRC 15573 / CFN 42).